A 32-amino-acid polypeptide reads, in one-letter code: Photosystem II reaction center protein T (32 aa).

Residues 3–23 (ALVYTFLLIGTLIVIFFAVFF) form a helical membrane-spanning segment.

This sequence belongs to the PsbT family. PSII is composed of 1 copy each of membrane proteins PsbA, PsbB, PsbC, PsbD, PsbE, PsbF, PsbH, PsbI, PsbJ, PsbK, PsbL, PsbM, PsbT, PsbX, PsbY, PsbZ, Psb30/Ycf12, at least 3 peripheral proteins of the oxygen-evolving complex and a large number of cofactors. It forms dimeric complexes.

It is found in the plastid. The protein resides in the chloroplast thylakoid membrane. Functionally, found at the monomer-monomer interface of the photosystem II (PS II) dimer, plays a role in assembly and dimerization of PSII. PSII is a light-driven water plastoquinone oxidoreductase, using light energy to abstract electrons from H(2)O, generating a proton gradient subsequently used for ATP formation. This chain is Photosystem II reaction center protein T, found in Phaeodactylum tricornutum (strain CCAP 1055/1).